Reading from the N-terminus, the 416-residue chain is Vacuole membrane protein KMS2 (416 aa).

At G2 the chain carries N-acetylglycine. Residues 2-59 lie on the Cytoplasmic side of the membrane; it reads GYGNRASSKTPAISGLREKHQQDLEKLTLTSQPFKTLRLFVVAVFLYVRRWSSYLLAN. A helical membrane pass occupies residues 60–80; the sequence is VGWLILFCSIFVAFAALLVTL. Residues 81–100 lie on the Lumenal side of the membrane; the sequence is DGPHVKHVEELSEYTRFGLW. Residues 101-123 traverse the membrane as a helical segment; it reads WIFLGVASSIGLGSGLHTFVLYL. The Cytoplasmic portion of the chain corresponds to 124-249; that stretch reads GPHIALFTIK…WLLSHSQYLN (126 aa). Residues 250 to 270 form a helical membrane-spanning segment; the sequence is FFTILILASVPNPLFDLAGIM. Residues 271-281 lie on the Lumenal side of the membrane; sequence CGQFEKPFWEF. Residues 282–304 form a helical membrane-spanning segment; that stretch reads FLATLIGKAIIKTHIQTVFIICV. Residues 305 to 315 are Cytoplasmic-facing; that stretch reads CNNQLLDWVEN. Residues 316–336 form a helical membrane-spanning segment; that stretch reads ELIYILSFVPGFASALPELTA. The Lumenal segment spans residues 337–364; it reads KLRLMKEKYLIASPPVSSDINVKKWDLS. A helical transmembrane segment spans residues 365 to 385; that stretch reads FASVWNGVVWLMLLNFFGQIV. Residues 386-416 are Cytoplasmic-facing; it reads TSTAQRYLKKQQEEELDALTNKSSLTSKKSK.

It belongs to the VMP1 family.

It is found in the endoplasmic reticulum membrane. Its function is as follows. Involved in the early secretory pathway. Required for the correct export of secretory products from the endoplasmic reticulum (ER) and involved in the maintenance of ER integrity. This Arabidopsis thaliana (Mouse-ear cress) protein is Vacuole membrane protein KMS2.